The primary structure comprises 653 residues: Golgi integral membrane protein 4 (653 aa).

The N-myristoyl glycine moiety is linked to residue glycine 2. The Cytoplasmic portion of the chain corresponds to 2–12 (GNGMCSRKQKR). A helical; Signal-anchor for type II membrane protein transmembrane segment spans residues 13–33 (IFQTLLLLTVVFGFLYGAMLY). At 34–653 (LELQTQLRKA…AEKSHRRAEM (620 aa)) the chain is on the lumenal side. Residues 38 to 107 (TQLRKAEAVA…ETLNKGRQDS (70 aa)) are golgi targeting. A coiled-coil region spans residues 66-216 (EHRSRLEKSL…KQLKDTLNRI (151 aa)). Residues 80-175 (LEHKKAKEDF…QELSKLKETV (96 aa)) form an endosome targeting region. Positions 122–143 (KSQHEELRKQHSDLEEEHRKQG) are disordered. The span at 123–143 (SQHEELRKQHSDLEEEHRKQG) shows a compositional bias: basic and acidic residues. Residues 176–220 (YNLREENRQLRKAHQDIHTQLQDVKTQVAEYKQLKDTLNRIPSFR) form a golgi targeting region. N-linked (GlcNAc...) asparagine glycosylation is present at asparagine 229. Positions 253 to 653 (QEGQQNHDAM…AEKSHRRAEM (401 aa)) are disordered. Basic and acidic residues-rich tracts occupy residues 261-270 (AMPRRMEEKP), 290-307 (EPRE…RKAL), 319-328 (EHLEEEHDPS), 348-360 (LDGR…EHST), and 381-398 (ARRD…EALH). Serine 328 carries the post-translational modification Phosphoserine. The span at 399-423 (QQRLHGQLLRQQQQQQYLAREMAQQ) shows a compositional bias: low complexity. Basic and acidic residues-rich tracts occupy residues 466 to 505 (AYDR…DRAA) and 527 to 545 (EQVR…KQSE). Serine 538 carries the phosphoserine modification. Residues 565–587 (QQEDNVDEQYQEEGEEEVQEDLT) are compositionally biased toward acidic residues. Tyrosine 574 is subject to Phosphotyrosine. Threonine 587 is modified (phosphothreonine). The segment covering 588–599 (EEKKRELEHNAE) has biased composition (basic and acidic residues). Tyrosine 631 bears the Phosphotyrosine mark. Residues 631–640 (YEEEEDEEDG) are compositionally biased toward acidic residues.

It belongs to the GOLIM4 family. In terms of processing, phosphorylated by c-AMP-dependent kinases most probably in its lumenal part. O-glycosylated; modified by sialic acid residues. Post-translationally, N-glycosylated; N-glycans are of the complex type and modified by sialic acid residues. In terms of tissue distribution, expressed in liver, pancreas and pituitary (at protein level).

The protein localises to the golgi apparatus. It localises to the golgi stack membrane. Its subcellular location is the endosome membrane. It is found in the membrane. Its function is as follows. Plays a role in endosome to Golgi protein trafficking; mediates protein transport along the late endosome-bypass pathway from the early endosome to the Golgi. The sequence is that of Golgi integral membrane protein 4 (Golim4) from Rattus norvegicus (Rat).